The following is a 70-amino-acid chain: Kappa-conotoxin-like Sx11.2 (70 aa).

Positions 1–26 (MMFRVTSVGCLLLVIVFLNLVVPTSA) are cleaved as a signal peptide. Disulfide bonds link Cys27/Cys41, Cys34/Cys46, Cys40/Cys50, and Cys45/Cys54. Residues Glu30, Glu35, and Glu44 each carry the 4-carboxyglutamate modification. A 4-hydroxyproline modification is found at Pro53. At Pro57 the chain carries Proline amide. Residues 61–70 (SKLQEFFRQR) constitute a propeptide that is removed on maturation.

This sequence belongs to the conotoxin I2 superfamily. As to expression, expressed by the venom duct.

It localises to the secreted. Modulator of potassium channels, specifically up-modulates the calcium and voltage-gated BK channels, has no effect on single channel conductance, but increases the open probability of BK channels. This Conus striolatus (Cone snail) protein is Kappa-conotoxin-like Sx11.2.